Here is a 148-residue protein sequence, read N- to C-terminus: Fluoride-specific ion channel FluC 2 (148 aa).

The next 4 membrane-spanning stretches (helical) occupy residues 23-43 (LGHL…RLAV), 61-81 (GTLA…TLIF), 92-112 (FWVL…LHTL), and 120-140 (LLGG…ALAG). Na(+) is bound by residues glycine 99 and threonine 102.

The protein belongs to the fluoride channel Fluc/FEX (TC 1.A.43) family.

The protein localises to the cell membrane. It carries out the reaction fluoride(in) = fluoride(out). Its activity is regulated as follows. Na(+) is not transported, but it plays an essential structural role and its presence is essential for fluoride channel function. Its function is as follows. Fluoride-specific ion channel. Important for reducing fluoride concentration in the cell, thus reducing its toxicity. The chain is Fluoride-specific ion channel FluC 2 from Rubrobacter xylanophilus (strain DSM 9941 / JCM 11954 / NBRC 16129 / PRD-1).